Reading from the N-terminus, the 76-residue chain is MPREIKEIKDFLVTARRKDAKSVKIKKNAENVKFKVRCSRFLYTLVITDKEKAEKLKQSLPPGLQVKEVKKTNEKL.

This sequence belongs to the eukaryotic ribosomal protein eL38 family.

This chain is Large ribosomal subunit protein eL38 (RpL38), found in Lysiphlebus testaceipes (Greenbugs aphid parastoid).